Here is a 312-residue protein sequence, read N- to C-terminus: Tetraacyldisaccharide 4'-kinase (312 aa).

60-67 provides a ligand contact to ATP; it reads IAGGSGKT.

The protein belongs to the LpxK family.

It carries out the reaction a lipid A disaccharide + ATP = a lipid IVA + ADP + H(+). It participates in glycolipid biosynthesis; lipid IV(A) biosynthesis; lipid IV(A) from (3R)-3-hydroxytetradecanoyl-[acyl-carrier-protein] and UDP-N-acetyl-alpha-D-glucosamine: step 6/6. Its function is as follows. Transfers the gamma-phosphate of ATP to the 4'-position of a tetraacyldisaccharide 1-phosphate intermediate (termed DS-1-P) to form tetraacyldisaccharide 1,4'-bis-phosphate (lipid IVA). The protein is Tetraacyldisaccharide 4'-kinase of Helicobacter acinonychis (strain Sheeba).